Here is a 141-residue protein sequence, read N- to C-terminus: Large ribosomal subunit protein uL11 (141 aa).

The protein belongs to the universal ribosomal protein uL11 family. As to quaternary structure, part of the ribosomal stalk of the 50S ribosomal subunit. Interacts with L10 and the large rRNA to form the base of the stalk. L10 forms an elongated spine to which L12 dimers bind in a sequential fashion forming a multimeric L10(L12)X complex. Post-translationally, one or more lysine residues are methylated.

Its function is as follows. Forms part of the ribosomal stalk which helps the ribosome interact with GTP-bound translation factors. The polypeptide is Large ribosomal subunit protein uL11 (Streptococcus pneumoniae serotype 2 (strain D39 / NCTC 7466)).